Here is a 460-residue protein sequence, read N- to C-terminus: Ribosomal protein uS12 methylthiotransferase RimO (460 aa).

Positions 17–128 (PAVAVLHLGC…IVQVIQRAER (112 aa)) constitute an MTTase N-terminal domain. Cys-26, Cys-62, Cys-91, Cys-166, Cys-170, and Cys-173 together coordinate [4Fe-4S] cluster. In terms of domain architecture, Radical SAM core spans 152–381 (TTHAPVAYLR…MQLQQGIAFR (230 aa)). Positions 384–450 (REQVGQVVPV…PYDLFGQVVE (67 aa)) constitute a TRAM domain.

The protein belongs to the methylthiotransferase family. RimO subfamily. [4Fe-4S] cluster serves as cofactor.

The protein resides in the cytoplasm. It carries out the reaction L-aspartate(89)-[ribosomal protein uS12]-hydrogen + (sulfur carrier)-SH + AH2 + 2 S-adenosyl-L-methionine = 3-methylsulfanyl-L-aspartate(89)-[ribosomal protein uS12]-hydrogen + (sulfur carrier)-H + 5'-deoxyadenosine + L-methionine + A + S-adenosyl-L-homocysteine + 2 H(+). Functionally, catalyzes the methylthiolation of an aspartic acid residue of ribosomal protein uS12. The sequence is that of Ribosomal protein uS12 methylthiotransferase RimO from Synechococcus sp. (strain JA-3-3Ab) (Cyanobacteria bacterium Yellowstone A-Prime).